Here is a 425-residue protein sequence, read N- to C-terminus: ATP-dependent RNA helicase RhlB (425 aa).

The short motif at 9–37 (TRFADLALHPKIQQAISSAGFEYCTPIQA) is the Q motif element. A Helicase ATP-binding domain is found at 40–218 (LPVALSNRDV…YEHMNAPTKL (179 aa)). 53–60 (AQTGTGKT) contacts ATP. The DEAD box signature appears at 164 to 167 (DEAD). The Helicase C-terminal domain occupies 242–389 (KFPLLLTLIE…VTKYDGDALL (148 aa)). The segment at 391-425 (DLRRPRPIQRRRRHNSGGGKGKPRGRRSGPPRNAS) is disordered. A compositionally biased stretch (basic residues) spans 395–419 (PRPIQRRRRHNSGGGKGKPRGRRSG).

The protein belongs to the DEAD box helicase family. RhlB subfamily. As to quaternary structure, component of the RNA degradosome, which is a multiprotein complex involved in RNA processing and mRNA degradation.

It localises to the cytoplasm. The catalysed reaction is ATP + H2O = ADP + phosphate + H(+). DEAD-box RNA helicase involved in RNA degradation. Has RNA-dependent ATPase activity and unwinds double-stranded RNA. The sequence is that of ATP-dependent RNA helicase RhlB from Idiomarina loihiensis (strain ATCC BAA-735 / DSM 15497 / L2-TR).